We begin with the raw amino-acid sequence, 1020 residues long: Carbamoyl phosphate synthase arginine-specific large chain (1020 aa).

Positions 1 to 401 are carboxyphosphate synthetic domain; it reads MPKNNAIHSI…ATLKAIASLE (401 aa). ATP is bound by residues arginine 129, arginine 169, glycine 175, glycine 176, glutamine 208, isoleucine 210, glutamate 215, glycine 241, isoleucine 242, histidine 243, glutamine 284, and glutamate 298. The region spanning 133-327 is the ATP-grasp 1 domain; sequence KTLMKRLHQP…IAKIAADIAI (195 aa). Mg(2+)-binding residues include glutamine 284, glutamate 298, and asparagine 300. Mn(2+)-binding residues include glutamine 284, glutamate 298, and asparagine 300. Oligomerization domain regions lie at residues 402 to 542 and 402 to 544; these read IDPK…FGQT and IDPK…QTNE. 2 carbamoyl phosphate synthetic domain regions span residues 543-927 and 544-927; these read NESH…ADSY and ESHP…ADSY. An ATP-grasp 2 domain is found at 669 to 858; sequence ADCLRLLKIA…LAQLATRLIL (190 aa). Residues arginine 705, glutamine 744, leucine 746, glutamate 750, glycine 775, valine 776, histidine 777, serine 778, and glutamine 818 each coordinate ATP. Residues glutamine 818 and asparagine 831 each contribute to the Mg(2+) site. Positions 818 and 831 each coordinate Mn(2+). Residues 927–1020 form the MGS-like domain; it reads YHLETWQTVD…LAVTPTPATI (94 aa). An allosteric domain region spans residues 928 to 1020; that stretch reads HLETWQTVDG…LAVTPTPATI (93 aa).

The protein belongs to the CarB family. Composed of two chains; the small (or glutamine) chain promotes the hydrolysis of glutamine to ammonia, which is used by the large (or ammonia) chain to synthesize carbamoyl phosphate. Tetramer of heterodimers (alpha,beta)4. It depends on Mg(2+) as a cofactor. Mn(2+) serves as cofactor.

It catalyses the reaction hydrogencarbonate + L-glutamine + 2 ATP + H2O = carbamoyl phosphate + L-glutamate + 2 ADP + phosphate + 2 H(+). It carries out the reaction hydrogencarbonate + NH4(+) + 2 ATP = carbamoyl phosphate + 2 ADP + phosphate + 2 H(+). It participates in amino-acid biosynthesis; L-arginine biosynthesis; carbamoyl phosphate from bicarbonate: step 1/1. In terms of biological role, large subunit of the glutamine-dependent carbamoyl phosphate synthetase (CPSase). CPSase catalyzes the formation of carbamoyl phosphate from the ammonia moiety of glutamine, carbonate, and phosphate donated by ATP, constituting the first step of the biosynthetic pathway leading to arginine and/or urea. The large subunit (synthetase) binds the substrates ammonia (free or transferred from glutamine from the small subunit), hydrogencarbonate and ATP and carries out an ATP-coupled ligase reaction, activating hydrogencarbonate by forming carboxy phosphate which reacts with ammonia to form carbamoyl phosphate. In Lactiplantibacillus plantarum (strain ATCC BAA-793 / NCIMB 8826 / WCFS1) (Lactobacillus plantarum), this protein is Carbamoyl phosphate synthase arginine-specific large chain.